The chain runs to 37 residues: Large ribosomal subunit protein bL36 (37 aa).

This sequence belongs to the bacterial ribosomal protein bL36 family.

The protein is Large ribosomal subunit protein bL36 of Sulfurimonas denitrificans (strain ATCC 33889 / DSM 1251) (Thiomicrospira denitrificans (strain ATCC 33889 / DSM 1251)).